A 270-amino-acid chain; its full sequence is MAAASSGEKEKERPGGGLGAAGGNSTRERLLSALEDLEVLSRELIEMLAISRNQKLLQSGEENQVLELLIHRDGEFQELMKLALNQGKIHHEMQVLEKEVEKRDSDIQQLQKQLKEAEQILATAVYQAKEKLKSIEKARKGAISSEEIIKYAHRISASNAVCAPLTWVPGDPRRPYPTDLEMRSGLLGQMNNPSTNGVNGHLPGDALAAGRLPDVLAPQYPWQSNDMAMNMLPPNHSHDFLLEPPGHNKENEDDVEVMSTDSSSSSSDSD.

The segment at Met1–Ser25 is disordered. Ala2 carries the post-translational modification N-acetylalanine. Coiled coils occupy residues Asn24–Leu48 and His90–Lys131. Phosphoserine is present on Ser32. Positions Met231 to Asp270 are disordered. The span at His236–Glu250 shows a compositional bias: basic and acidic residues. Low complexity predominate over residues Ser259 to Asp270.

The protein belongs to the Mediator complex subunit 4 family. In terms of assembly, component of the Mediator complex, which is composed of MED1, MED4, MED6, MED7, MED8, MED9, MED10, MED11, MED12, MED13, MED13L, MED14, MED15, MED16, MED17, MED18, MED19, MED20, MED21, MED22, MED23, MED24, MED25, MED26, MED27, MED29, MED30, MED31, CCNC, CDK8 and CDC2L6/CDK11. The MED12, MED13, CCNC and CDK8 subunits form a distinct module termed the CDK8 module. Mediator containing the CDK8 module is less active than Mediator lacking this module in supporting transcriptional activation. Individual preparations of the Mediator complex lacking one or more distinct subunits have been variously termed ARC, CRSP, DRIP, PC2, SMCC and TRAP.

Its subcellular location is the nucleus. Its function is as follows. Component of the Mediator complex, a coactivator involved in the regulated transcription of nearly all RNA polymerase II-dependent genes. Mediator functions as a bridge to convey information from gene-specific regulatory proteins to the basal RNA polymerase II transcription machinery. Mediator is recruited to promoters by direct interactions with regulatory proteins and serves as a scaffold for the assembly of a functional preinitiation complex with RNA polymerase II and the general transcription factors. This Bos taurus (Bovine) protein is Mediator of RNA polymerase II transcription subunit 4 (MED4).